The sequence spans 447 residues: ATP-dependent protease ATPase subunit HslU (447 aa).

Residues Ile17, 59 to 64, Asp256, Glu321, and Arg393 each bind ATP; that span reads GVGKTE.

This sequence belongs to the ClpX chaperone family. HslU subfamily. In terms of assembly, a double ring-shaped homohexamer of HslV is capped on each side by a ring-shaped HslU homohexamer. The assembly of the HslU/HslV complex is dependent on binding of ATP.

It is found in the cytoplasm. Functionally, ATPase subunit of a proteasome-like degradation complex; this subunit has chaperone activity. The binding of ATP and its subsequent hydrolysis by HslU are essential for unfolding of protein substrates subsequently hydrolyzed by HslV. HslU recognizes the N-terminal part of its protein substrates and unfolds these before they are guided to HslV for hydrolysis. The sequence is that of ATP-dependent protease ATPase subunit HslU from Pseudomonas entomophila (strain L48).